We begin with the raw amino-acid sequence, 194 residues long: Small ribosomal subunit protein uS7 (194 aa).

It belongs to the universal ribosomal protein uS7 family. In terms of assembly, part of the 30S ribosomal subunit.

Functionally, one of the primary rRNA binding proteins, it binds directly to 16S rRNA where it nucleates assembly of the head domain of the 30S subunit. Is located at the subunit interface close to the decoding center. The sequence is that of Small ribosomal subunit protein uS7 from Methanospirillum hungatei JF-1 (strain ATCC 27890 / DSM 864 / NBRC 100397 / JF-1).